A 194-amino-acid polypeptide reads, in one-letter code: Imidazoleglycerol-phosphate dehydratase (194 aa).

This sequence belongs to the imidazoleglycerol-phosphate dehydratase family.

The protein localises to the cytoplasm. The catalysed reaction is D-erythro-1-(imidazol-4-yl)glycerol 3-phosphate = 3-(imidazol-4-yl)-2-oxopropyl phosphate + H2O. Its pathway is amino-acid biosynthesis; L-histidine biosynthesis; L-histidine from 5-phospho-alpha-D-ribose 1-diphosphate: step 6/9. The chain is Imidazoleglycerol-phosphate dehydratase from Listeria monocytogenes serotype 4a (strain HCC23).